The chain runs to 259 residues: MFAFFNKNDPADNTDVQLDPERIPAHVAIIMDGNGRWAKARHLPRVAGHKEGMNTVKKITIAASDLGVKVLTLYAFSTENWKRPTDEVNYLMQLPVSFFDTFVPDLIKNNVRVQVMGYVDHLPEATQKAVQNAIADTKDCDGMVLNFALNYGSRAEIVTGVQKIAQQVQDGQLAVGDIDDATIDAALMTAPLAPYNDPDLLIRTSGEERISNFLMWQIAYSELVFTDVKWPDFTAATLQACIADFQSRDRRFGGLSDHK.

Residue Asp-32 is part of the active site. Asp-32 lines the Mg(2+) pocket. Residues 33–36, Trp-37, Arg-45, His-49, and 77–79 contribute to the substrate site; these read GNGR and STE. Asn-80 acts as the Proton acceptor in catalysis. Substrate-binding positions include Trp-81, Arg-83, Arg-203, and 209 to 211; that span reads RIS. Glu-222 is a binding site for Mg(2+).

It belongs to the UPP synthase family. As to quaternary structure, homodimer. Requires Mg(2+) as cofactor.

The enzyme catalyses 8 isopentenyl diphosphate + (2E,6E)-farnesyl diphosphate = di-trans,octa-cis-undecaprenyl diphosphate + 8 diphosphate. Functionally, catalyzes the sequential condensation of isopentenyl diphosphate (IPP) with (2E,6E)-farnesyl diphosphate (E,E-FPP) to yield (2Z,6Z,10Z,14Z,18Z,22Z,26Z,30Z,34E,38E)-undecaprenyl diphosphate (di-trans,octa-cis-UPP). UPP is the precursor of glycosyl carrier lipid in the biosynthesis of bacterial cell wall polysaccharide components such as peptidoglycan and lipopolysaccharide. The sequence is that of Ditrans,polycis-undecaprenyl-diphosphate synthase ((2E,6E)-farnesyl-diphosphate specific) (uppS) from Lactiplantibacillus plantarum (strain ATCC BAA-793 / NCIMB 8826 / WCFS1) (Lactobacillus plantarum).